An 86-amino-acid chain; its full sequence is High affinity immunoglobulin epsilon receptor subunit gamma (86 aa).

An N-terminal signal peptide occupies residues 1-18 (MIPAVVLLLLLLVEQAAA). At 19 to 23 (LGEPQ) the chain is on the extracellular side. A helical membrane pass occupies residues 24 to 44 (LCYILDAILFLYGIVLTLLYC). At 45–86 (RLKIQVRKAAIASYEKSDGVYTGLSTRNQETYETLKHEKPPQ) the chain is on the cytoplasmic side. Positions 54 to 82 (AIASYEKSDGVYTGLSTRNQETYETLKHE) constitute an ITAM domain. Residue Y65 is modified to Phosphotyrosine. S69 is modified (phosphoserine). Residue Y76 is modified to Phosphotyrosine. T78 bears the Phosphothreonine mark.

Belongs to the CD3Z/FCER1G family. As to quaternary structure, igE Fc receptor is a tetramer of an alpha chain, a beta chain, and two disulfide linked gamma chains. Associates with FCGR1A; forms a functional signaling complex. The signaling subunit of immunoglobulin gamma (IgG) Fc receptor complex. As a homodimer or a heterodimer of CD247 and FCER1G, associates with the ligand binding subunit FCGR3A to form a functional receptor complex. Associates with CLEC6A. Interacts with CLEC4E. Interacts (via ITAM domain) with SYK (via SH2 domains); activates SYK, enabling integrin-mediated activation of neutrophils and macrophages. Interacts with CSF2RB and recruits SYK in response to IL3 stimulation; this interaction is direct. Interacts with CD300LH; the interaction may be indirect. Interacts with CD300LD. Interacts with TARM1.

Its subcellular location is the cell membrane. Its function is as follows. Adapter protein containing an immunoreceptor tyrosine-based activation motif (ITAM) that transduces activation signals from various immunoreceptors. As a component of the high-affinity immunoglobulin E (IgE) receptor, mediates allergic inflammatory signaling in mast cells. As a constitutive component of interleukin-3 receptor complex, selectively mediates interleukin 4/IL4 production by basophils priming T-cells toward effector T-helper 2 subset. Associates with pattern recognition receptors CLEC4D and CLEC4E to form a functional signaling complex in myeloid cells. Binding of mycobacterial trehalose 6,6'-dimycolate (TDM) to this receptor complex leads to phosphorylation of ITAM, triggering activation of SYK, CARD9 and NF-kappa-B, consequently driving maturation of antigen-presenting cells and shaping antigen-specific priming of T-cells toward effector T-helper 1 and T-helper 17 cell subtypes. May function cooperatively with other activating receptors. Functionally linked to integrin beta-2/ITGB2-mediated neutrophil activation. Also involved in integrin alpha-2/ITGA2-mediated platelet activation. The protein is High affinity immunoglobulin epsilon receptor subunit gamma (FCER1G) of Macaca fascicularis (Crab-eating macaque).